Here is a 452-residue protein sequence, read N- to C-terminus: Isocitrate dehydrogenase [NADP], mitochondrial (452 aa).

A mitochondrion-targeting transit peptide spans 1–39 (MAGYLRAVSSLCRASGSTRTWAPAALNVPSWPEQPRRHY). An N6-acetyllysine mark is found at K45, K48, K67, and K69. 2 positions are modified to N6-acetyllysine; alternate: K80 and K106. K80 and K106 each carry N6-succinyllysine; alternate. NADP(+) contacts are provided by residues 115 to 117 (TIT) and R122. T117 is a binding site for D-threo-isocitrate. Residues 134-140 (SPNGTIR) and R149 contribute to the D-threo-isocitrate site. K155 is modified (N6-acetyllysine). An N6-acetyllysine; alternate modification is found at K166. An N6-succinyllysine; alternate modification is found at K166. R172 serves as a coordination point for D-threo-isocitrate. 2 positions are modified to N6-acetyllysine; alternate: K180 and K193. N6-succinyllysine; alternate is present on residues K180 and K193. At K199 the chain carries N6-acetyllysine. K256 is modified (N6-acetyllysine; alternate). Position 256 is an N6-succinyllysine; alternate (K256). An N6-acetyllysine mark is found at K263, K272, K275, and K280. K282 bears the N6-acetyllysine; alternate mark. K282 is subject to N6-succinyllysine; alternate. Residue D291 coordinates Mn(2+). NADP(+) is bound at residue K299. Mn(2+) is bound at residue D314. Residues 349 to 354 (GTVTRH) and N367 each bind NADP(+). K384 is subject to N6-acetyllysine; alternate. N6-succinyllysine; alternate is present on K384. K400, K413, and K442 each carry N6-acetyllysine.

Belongs to the isocitrate and isopropylmalate dehydrogenases family. In terms of assembly, homodimer. Mg(2+) is required as a cofactor. It depends on Mn(2+) as a cofactor. Post-translationally, acetylation at Lys-413 dramatically reduces catalytic activity. Deacetylated by SIRT3.

Its subcellular location is the mitochondrion. The enzyme catalyses D-threo-isocitrate + NADP(+) = 2-oxoglutarate + CO2 + NADPH. Plays a role in intermediary metabolism and energy production. It may tightly associate or interact with the pyruvate dehydrogenase complex. The protein is Isocitrate dehydrogenase [NADP], mitochondrial (Idh2) of Rattus norvegicus (Rat).